The primary structure comprises 359 residues: Peptide chain release factor 1 (359 aa).

Gln-236 is modified (N5-methylglutamine).

It belongs to the prokaryotic/mitochondrial release factor family. Post-translationally, methylated by PrmC. Methylation increases the termination efficiency of RF1.

Its subcellular location is the cytoplasm. In terms of biological role, peptide chain release factor 1 directs the termination of translation in response to the peptide chain termination codons UAG and UAA. The sequence is that of Peptide chain release factor 1 from Streptococcus pyogenes serotype M12 (strain MGAS2096).